Reading from the N-terminus, the 343-residue chain is Protein phosphatase 2C homolog 7, mitochondrial (343 aa).

A mitochondrion-targeting transit peptide spans 1 to 39 (MFANVGFRTLRVSRGPLYGSCSQIISFSKRTFYSSAKSG). One can recognise a PPM-type phosphatase domain in the interval 76 to 342 (IYQKLKDSIR…DDITVVVVRV (267 aa)). Positions 109, 110, and 265 each coordinate Mn(2+).

It depends on Mg(2+) as a cofactor. Mn(2+) is required as a cofactor.

Its subcellular location is the mitochondrion. The catalysed reaction is O-phospho-L-seryl-[protein] + H2O = L-seryl-[protein] + phosphate. It carries out the reaction O-phospho-L-threonyl-[protein] + H2O = L-threonyl-[protein] + phosphate. In terms of biological role, protein phosphatase which positively regulates biosynthesis of the ubiquinone, coenzyme Q. Dephosphorylates and activates the ubiquinone biosynthesis protein CAT5/COQ7. Also dephosphorylates CIT1 on 'Ser-462', which leads to its activation. The sequence is that of Protein phosphatase 2C homolog 7, mitochondrial (PTC7) from Saccharomyces cerevisiae (strain ATCC 204508 / S288c) (Baker's yeast).